Consider the following 485-residue polypeptide: Glycogen synthase (485 aa).

An ADP-alpha-D-glucose-binding site is contributed by Lys-15.

This sequence belongs to the glycosyltransferase 1 family. Bacterial/plant glycogen synthase subfamily.

It catalyses the reaction [(1-&gt;4)-alpha-D-glucosyl](n) + ADP-alpha-D-glucose = [(1-&gt;4)-alpha-D-glucosyl](n+1) + ADP + H(+). It participates in glycan biosynthesis; glycogen biosynthesis. In terms of biological role, synthesizes alpha-1,4-glucan chains using ADP-glucose. The polypeptide is Glycogen synthase (Thermosipho africanus (strain TCF52B)).